The following is a 324-amino-acid chain: IDS-like terpene synthase 3 (324 aa).

Mg(2+) contacts are provided by Asp77 and Asp81.

It belongs to the FPP/GGPP synthase family. Mg(2+) is required as a cofactor.

It catalyses the reaction (2E)-geranyl diphosphate + H2O = linalool + diphosphate. It carries out the reaction (2E,6E)-farnesyl diphosphate + H2O = (6E)-nerolidol + diphosphate. In terms of biological role, terpene synthase that shows monoterpene synthase activity and produces linalool, using geranyl diphosphate (GPP) as substrate. Also shows sesquiterpene synthase activity as it is able to convert farnesyl diphosphate (FPP) into (E)-nerolidol. The chain is IDS-like terpene synthase 3 from Melampsora lini (Rust fungus).